A 496-amino-acid chain; its full sequence is Tripartite motif-containing protein 30A (496 aa).

Residues 15-59 form an RING-type zinc finger; sequence CPICLELLKEPVSADCNHSFCRACITLNYESNRNTDGKGNCPVCR. Residues 91-132 form a B box-type zinc finger; that stretch reads QKVNICAQHGEKLRLFCRKDMMVICWLCERSQEHRGHQTALI. Zn(2+)-binding residues include cysteine 96, histidine 99, cysteine 118, and histidine 124. The stretch at 173-239 forms a coiled coil; sequence NQIQINVENV…RDLISDVEHH (67 aa). A highly hydrophilic region spans residues 205 to 210; that stretch reads KKEKKE. Residues 268–276 carry the Nuclear localization signal motif; the sequence is TVPQKRKRT. The B30.2/SPRY domain maps to 281–496; the sequence is DLKGMLQVYQ…EPMTICGPPS (216 aa).

In terms of assembly, homomultimer. Interacts with NR2C2/TAK1, TAB2 and TAB3. Does not interact with NLRP3, NLRC4 or TAB1. In terms of tissue distribution, highly expressed in spleen and lymph nodes (at protein level).

The protein resides in the cytoplasm. The protein localises to the nucleus. In terms of biological role, trans-acting factor that regulates gene expression of interleukin 2 receptor alpha chain. May affect IL2R-alpha expression through cis-acting negative regulatory elements or through competition with proteins that bind to enhancer or activator sequences. Negatively regulates Toll-like receptor (TLR)-mediated activation of NFKB by promoting degradation of TAB2 and TAB3 and preventing TRAF6 autoubiquitination. Negatively regulates production of reactive oxygen species (ROS) which inhibits activation of the NLRP3 inflammasome complex. This, in turn, regulates activation of CASP1 and subsequent cleavage of IL1B and IL18. No activity detected against a range of retroviruses including a number of lentiviruses, gammaretroviruses and betaretroviruses. The polypeptide is Tripartite motif-containing protein 30A (Trim30a) (Mus musculus (Mouse)).